The following is a 237-amino-acid chain: Ribose-5-phosphate isomerase A (237 aa).

Residues 29–32, 86–89, and 99–102 contribute to the substrate site; these read SGST, DGAD, and KGGG. Residue glutamate 108 is the Proton acceptor of the active site. Lysine 126 is a binding site for substrate.

This sequence belongs to the ribose 5-phosphate isomerase family. In terms of assembly, homodimer.

It catalyses the reaction aldehydo-D-ribose 5-phosphate = D-ribulose 5-phosphate. It functions in the pathway carbohydrate degradation; pentose phosphate pathway; D-ribose 5-phosphate from D-ribulose 5-phosphate (non-oxidative stage): step 1/1. In terms of biological role, catalyzes the reversible conversion of ribose-5-phosphate to ribulose 5-phosphate. The chain is Ribose-5-phosphate isomerase A from Prochlorococcus marinus (strain MIT 9312).